A 77-amino-acid chain; its full sequence is MSLFGFFKNKGSATTATDRLKLILAKERTLNLPYMEEMRKEIIAVIQKYTKSSDIHFKTLDSNQSVETIEVEIILPK.

The protein belongs to the MinE family.

Prevents the cell division inhibition by proteins MinC and MinD at internal division sites while permitting inhibition at polar sites. This ensures cell division at the proper site by restricting the formation of a division septum at the midpoint of the long axis of the cell. The protein is Cell division topological specificity factor of Helicobacter pylori (strain HPAG1).